The primary structure comprises 398 residues: S-adenosylmethionine synthase (398 aa).

His-16 contacts ATP. Asp-18 is a binding site for Mg(2+). Glu-51 provides a ligand contact to K(+). Residues Glu-64 and Gln-108 each coordinate L-methionine. Positions 108 to 118 (QSADIAQGVDA) are flexible loop. ATP is bound by residues 176-178 (DSK), 242-243 (KF), Asp-251, 257-258 (RK), Ala-274, and Lys-278. Asp-251 is an L-methionine binding site. Lys-282 is a binding site for L-methionine.

It belongs to the AdoMet synthase family. Homotetramer; dimer of dimers. It depends on Mg(2+) as a cofactor. Requires K(+) as cofactor.

Its subcellular location is the cytoplasm. The enzyme catalyses L-methionine + ATP + H2O = S-adenosyl-L-methionine + phosphate + diphosphate. It functions in the pathway amino-acid biosynthesis; S-adenosyl-L-methionine biosynthesis; S-adenosyl-L-methionine from L-methionine: step 1/1. Its function is as follows. Catalyzes the formation of S-adenosylmethionine (AdoMet) from methionine and ATP. The overall synthetic reaction is composed of two sequential steps, AdoMet formation and the subsequent tripolyphosphate hydrolysis which occurs prior to release of AdoMet from the enzyme. The sequence is that of S-adenosylmethionine synthase from Rhodopseudomonas palustris (strain BisB5).